The sequence spans 391 residues: MKILIDENMPYAAELFGQLGEVVTKPGRTLSADDLIDIDALMIRSVTKVNHNLISKANKLQFVGTATAGQDHVDQALLAERGITFTSAPGCNKVGVAEYVLSALMVIGQQQGFSIFDKTIGIIGAGNVGSYLAQCLDALGIPYLLNDPIKEQEGDTRQFHSLEAIKAQCDVITVHTPITKDGEYPTHHLINEAFIDALQPDAILINAARGPVTDNQALKKALQLSQSGLGKKLTAVLDVFEFEPHVDLELLPLLAFATPHIAGYGLEGKARGTTMVFNRYCAFLNIDQAVEASSLLPIAPVPNVSLSRKWDDATLFSLIQLIYDIRKDDALFRRNMVVTKGNEAQMATAFDQMRKNYWDRREYSAITVTGKVGFGVESLAKLGFTVVEDIQ.

Substrate-binding residues include S45 and T67. Positions 147 and 176 each coordinate NAD(+). R209 is a catalytic residue. NAD(+) is bound at residue D238. E243 is an active-site residue. H260 acts as the Proton donor in catalysis. Residue G263 coordinates NAD(+). Y264 is a binding site for substrate.

This sequence belongs to the D-isomer specific 2-hydroxyacid dehydrogenase family. PdxB subfamily. As to quaternary structure, homodimer.

It localises to the cytoplasm. The catalysed reaction is 4-phospho-D-erythronate + NAD(+) = (R)-3-hydroxy-2-oxo-4-phosphooxybutanoate + NADH + H(+). The protein operates within cofactor biosynthesis; pyridoxine 5'-phosphate biosynthesis; pyridoxine 5'-phosphate from D-erythrose 4-phosphate: step 2/5. Its function is as follows. Catalyzes the oxidation of erythronate-4-phosphate to 3-hydroxy-2-oxo-4-phosphonooxybutanoate. In Photobacterium profundum (strain SS9), this protein is Erythronate-4-phosphate dehydrogenase.